The primary structure comprises 735 residues: Catalase-peroxidase (735 aa).

Residues 1 to 25 form a disordered region; it reads MSDSKCPVTGKSSRQVAGGGTSNRD. The segment at residues 95-223 is a cross-link (tryptophyl-tyrosyl-methioninium (Trp-Tyr) (with M-249)); it reads WHSAGTYRMG…LAAVQMGLIY (129 aa). Catalysis depends on histidine 96, which acts as the Proton acceptor. The tryptophyl-tyrosyl-methioninium (Tyr-Met) (with W-95) cross-link spans 223 to 249; sequence YINPEGPDGNPDPVASGRDVRETFARM. Histidine 264 lines the heme b pocket.

Belongs to the peroxidase family. Peroxidase/catalase subfamily. In terms of assembly, homodimer or homotetramer. It depends on heme b as a cofactor. Formation of the three residue Trp-Tyr-Met cross-link is important for the catalase, but not the peroxidase activity of the enzyme.

The enzyme catalyses H2O2 + AH2 = A + 2 H2O. The catalysed reaction is 2 H2O2 = O2 + 2 H2O. In terms of biological role, bifunctional enzyme with both catalase and broad-spectrum peroxidase activity. The sequence is that of Catalase-peroxidase from Trichlorobacter lovleyi (strain ATCC BAA-1151 / DSM 17278 / SZ) (Geobacter lovleyi).